Consider the following 166-residue polypeptide: Interferon gamma (166 aa).

Residues 1-23 (MKYTSSFLALLLCVLLGFSGSYG) form the signal peptide. Residue glutamine 24 is modified to Pyrrolidone carboxylic acid. Residues asparagine 39 and asparagine 106 are each glycosylated (N-linked (GlcNAc...) asparagine).

The protein belongs to the type II (or gamma) interferon family. Homodimer. Interacts with IFNGR1 (via extracellular domain); this interaction promotes IFNGR1 dimerization. As to expression, released primarily from activated T lymphocytes.

Its subcellular location is the secreted. In terms of biological role, type II interferon produced by immune cells such as T-cells and NK cells that plays crucial roles in antimicrobial, antiviral, and antitumor responses by activating effector immune cells and enhancing antigen presentation. Primarily signals through the JAK-STAT pathway after interaction with its receptor IFNGR1 to affect gene regulation. Upon IFNG binding, IFNGR1 intracellular domain opens out to allow association of downstream signaling components JAK2, JAK1 and STAT1, leading to STAT1 activation, nuclear translocation and transcription of IFNG-regulated genes. Many of the induced genes are transcription factors such as IRF1 that are able to further drive regulation of a next wave of transcription. Plays a role in class I antigen presentation pathway by inducing a replacement of catalytic proteasome subunits with immunoproteasome subunits. In turn, increases the quantity, quality, and repertoire of peptides for class I MHC loading. Increases the efficiency of peptide generation also by inducing the expression of activator PA28 that associates with the proteasome and alters its proteolytic cleavage preference. Up-regulates as well MHC II complexes on the cell surface by promoting expression of several key molecules such as cathepsins B/CTSB, H/CTSH, and L/CTSL. Participates in the regulation of hematopoietic stem cells during development and under homeostatic conditions by affecting their development, quiescence, and differentiation. The polypeptide is Interferon gamma (IFNG) (Ovis aries (Sheep)).